The following is a 285-amino-acid chain: Hypersensitive-induced response protein 3 (285 aa).

Residue Gly2 is the site of N-myristoyl glycine attachment. 2 coiled-coil regions span residues 113 to 139 (NLDDVFEQKNEIAKSVEEELDKAMTAY) and 165 to 185 (NAAARMRVAASEKAEAEKIIQ).

As to quaternary structure, self-interacts and forms heteromers. Interacts with NB-LRR class of R proteins before R proteins (e.g. RPS2 or RPM1) are activated by the effectors.

The protein resides in the cell membrane. This Arabidopsis thaliana (Mouse-ear cress) protein is Hypersensitive-induced response protein 3 (HIR3).